The sequence spans 234 residues: Staphylococcal superantigen-like 5 (234 aa).

The signal sequence occupies residues 1–30; that stretch reads MKMTAIAKASLALGILATGTITSLHQTVNA.

Belongs to the staphylococcal/streptococcal toxin family. Interacts with host SELPLG; this interaction prevents SELPLG-mediated neutrophil rolling. Interacts with host MMP9 (via sialic acid-containing O-glycans); this interaction inhibits MMP9 activity. Interacts with host GP1BA and GP6; these interactions play an important role in platelet binding and activation.

Its function is as follows. Secreted protein that plays a role in the inhibition of host innate immune system. Modulates the interaction between host SELPLG and P-selectin thereby preventing initial rolling of neutrophils toward the site of infection. Interferes with leukocyte trafficking by inhibiting host metalloproteinase-9/MMP9 activity. Also associates with two different platelet surface receptors GP1A and GP6 leading to platelet activation and aggregation. The sequence is that of Staphylococcal superantigen-like 5 from Staphylococcus aureus (strain NCTC 8325 / PS 47).